A 407-amino-acid chain; its full sequence is Putative membrane protein 047R (407 aa).

The tract at residues 265-337 is disordered; the sequence is INCVFKPDPP…PPKPTPPPPI (73 aa). Residues 271–337 show a composition bias toward pro residues; the sequence is PDPPPQPKPQ…PPKPTPPPPI (67 aa). 2 helical membrane-spanning segments follow: residues 355–372 and 385–403; these read NWIMLTFVGLVLALVIYP and NAAIAVLVGLNAFGLQSYV.

The protein belongs to the IIV-6 337L family.

It localises to the virion membrane. This chain is Putative membrane protein 047R, found in Aedes vexans (Inland floodwater mosquito).